Reading from the N-terminus, the 133-residue chain is Thioredoxin-2, mitochondrial (133 aa).

Residues 1–29 (MRGFIANSLKPHMRSFALRRSFTSSRILR) constitute a mitochondrion transit peptide. The region spanning 30–133 (KVNAVESFGD…LSSLLAKYQE (104 aa)) is the Thioredoxin domain. Residues cysteine 59 and cysteine 62 each act as nucleophile in the active site. A disulfide bond links cysteine 59 and cysteine 62.

It belongs to the thioredoxin family. Interacts with arg3.

Its subcellular location is the mitochondrion. Disulfide reductase which serves multiple functions in mitochondria, protecting mitochondrial components against thiol-oxidative damage as a thiol-disulfide oxidoreductase, and supporting urea cycle and respiration in mitochondria in a manner independent of active site thiols. The polypeptide is Thioredoxin-2, mitochondrial (trx2) (Schizosaccharomyces pombe (strain 972 / ATCC 24843) (Fission yeast)).